A 285-amino-acid polypeptide reads, in one-letter code: Phosphatidylserine decarboxylase proenzyme (285 aa).

Catalysis depends on charge relay system; for autoendoproteolytic cleavage activity residues aspartate 89, histidine 146, and serine 252. Serine 252 (schiff-base intermediate with substrate; via pyruvic acid; for decarboxylase activity) is an active-site residue. A Pyruvic acid (Ser); by autocatalysis modification is found at serine 252.

Belongs to the phosphatidylserine decarboxylase family. PSD-B subfamily. Prokaryotic type I sub-subfamily. As to quaternary structure, heterodimer of a large membrane-associated beta subunit and a small pyruvoyl-containing alpha subunit. It depends on pyruvate as a cofactor. In terms of processing, is synthesized initially as an inactive proenzyme. Formation of the active enzyme involves a self-maturation process in which the active site pyruvoyl group is generated from an internal serine residue via an autocatalytic post-translational modification. Two non-identical subunits are generated from the proenzyme in this reaction, and the pyruvate is formed at the N-terminus of the alpha chain, which is derived from the carboxyl end of the proenzyme. The autoendoproteolytic cleavage occurs by a canonical serine protease mechanism, in which the side chain hydroxyl group of the serine supplies its oxygen atom to form the C-terminus of the beta chain, while the remainder of the serine residue undergoes an oxidative deamination to produce ammonia and the pyruvoyl prosthetic group on the alpha chain. During this reaction, the Ser that is part of the protease active site of the proenzyme becomes the pyruvoyl prosthetic group, which constitutes an essential element of the active site of the mature decarboxylase.

The protein resides in the cell membrane. It carries out the reaction a 1,2-diacyl-sn-glycero-3-phospho-L-serine + H(+) = a 1,2-diacyl-sn-glycero-3-phosphoethanolamine + CO2. It participates in phospholipid metabolism; phosphatidylethanolamine biosynthesis; phosphatidylethanolamine from CDP-diacylglycerol: step 2/2. In terms of biological role, catalyzes the formation of phosphatidylethanolamine (PtdEtn) from phosphatidylserine (PtdSer). The protein is Phosphatidylserine decarboxylase proenzyme of Vibrio campbellii (strain ATCC BAA-1116).